We begin with the raw amino-acid sequence, 71 residues long: ATP synthase subunit c (71 aa).

Helical transmembrane passes span 5 to 25 (VLAA…IGIA) and 46 to 66 (FFIL…VMAF).

This sequence belongs to the ATPase C chain family. As to quaternary structure, F-type ATPases have 2 components, F(1) - the catalytic core - and F(0) - the membrane proton channel. F(1) has five subunits: alpha(3), beta(3), gamma(1), delta(1), epsilon(1). F(0) has three main subunits: a(1), b(2) and c(10-14). The alpha and beta chains form an alternating ring which encloses part of the gamma chain. F(1) is attached to F(0) by a central stalk formed by the gamma and epsilon chains, while a peripheral stalk is formed by the delta and b chains.

It is found in the cell membrane. In terms of biological role, f(1)F(0) ATP synthase produces ATP from ADP in the presence of a proton or sodium gradient. F-type ATPases consist of two structural domains, F(1) containing the extramembraneous catalytic core and F(0) containing the membrane proton channel, linked together by a central stalk and a peripheral stalk. During catalysis, ATP synthesis in the catalytic domain of F(1) is coupled via a rotary mechanism of the central stalk subunits to proton translocation. Functionally, key component of the F(0) channel; it plays a direct role in translocation across the membrane. A homomeric c-ring of between 10-14 subunits forms the central stalk rotor element with the F(1) delta and epsilon subunits. This chain is ATP synthase subunit c, found in Clostridium beijerinckii (strain ATCC 51743 / NCIMB 8052) (Clostridium acetobutylicum).